Here is a 65-residue protein sequence, read N- to C-terminus: Large ribosomal subunit protein bL33m (65 aa).

The transit peptide at 1–8 (MFLTTANL) directs the protein to the mitochondrion.

It belongs to the bacterial ribosomal protein bL33 family. As to quaternary structure, component of the mitochondrial ribosome large subunit (39S) which comprises a 16S rRNA and about 50 distinct proteins.

The protein localises to the mitochondrion. This chain is Large ribosomal subunit protein bL33m (mrpl33), found in Tetraodon nigroviridis (Spotted green pufferfish).